The following is a 509-amino-acid chain: Scavenger receptor class B member 1 (509 aa).

Residues 1-11 (MGGSARARWVA) lie on the Cytoplasmic side of the membrane. Residues 12-32 (VGLGVVGLLCAVLGVVMILVM) traverse the membrane as a helical segment. Topologically, residues 33–440 (PSLIKQQVLK…YTQLVLMPQV (408 aa)) are extracellular. N102, N108, N173, N212, N227, N255, N310, N330, and N383 each carry an N-linked (GlcNAc...) asparagine glycan. Residues C251 and C384 are joined by a disulfide bond. A helical membrane pass occupies residues 441-461 (LQYVQYVLLGLGGLLLLVPVI). At 462–509 (YQLRSQEKCFLFWSGSKKGSQDKEAIQAYSESLMSPAAKGTVLQEAKL) the chain is on the cytoplasmic side.

The protein belongs to the CD36 family. Post-translationally, N-glycosylated. The six cysteines of the extracellular domain are all involved in intramolecular disulfide bonds.

The protein localises to the cell membrane. Its subcellular location is the membrane. It localises to the caveola. Receptor for different ligands such as phospholipids, cholesterol ester, lipoproteins, phosphatidylserine and apoptotic cells. Receptor for HDL, mediating selective uptake of cholesteryl ether and HDL-dependent cholesterol efflux. Also facilitates the flux of free and esterified cholesterol between the cell surface and apoB-containing lipoproteins and modified lipoproteins, although less efficiently than HDL. May be involved in the phagocytosis of apoptotic cells, via its phosphatidylserine binding activity. This chain is Scavenger receptor class B member 1 (SCARB1), found in Cricetulus griseus (Chinese hamster).